The sequence spans 85 residues: Large ribosomal subunit protein bL27 (85 aa).

The segment at 1-21 (MAHKKGVGSSRNGRDSDGQRL) is disordered.

Belongs to the bacterial ribosomal protein bL27 family.

The sequence is that of Large ribosomal subunit protein bL27 from Citrifermentans bemidjiense (strain ATCC BAA-1014 / DSM 16622 / JCM 12645 / Bem) (Geobacter bemidjiensis).